Here is a 105-residue protein sequence, read N- to C-terminus: Prothymosin alpha-A (105 aa).

Residues 1 to 30 are compositionally biased toward basic and acidic residues; it reads MADTKVDTSKEVSAKDLKEKKQVEEAENGK. The segment at 1 to 105 is disordered; the sequence is MADTKVDTSK…VDPKKQKTDV (105 aa). Acidic residues-rich tracts occupy residues 39 to 78 and 87 to 96; these read ENEENGDQENEVDEEDDDVAEEDEEDDGEGDDDDEDEEAE and EDDDDDEDDV.

Belongs to the pro/parathymosin family. At the 20-somite stage (18 hpf), expressed on the dorsal side of the embryo in the developing central and peripheral nervous system (CNS and PNS), in the tail bud and the pronephric ducts. In the PNS, expressed in the otic vesicle, trigeminal ganglion and the anterior lateral line placode. Localized throughout the hindbrain, with highest expression in rhombomeres 3 and 4. In the head, expressed in the olfactory placode and in the diencephalic region. At the end of the segmentation period (20 hpf), expression begins in the newly forming endodermal pouches, and weakly in the pharyngeal arch precursor cells. During the early pharyngula period, expressed in the pectoral fin bud, the developing retina, and still present in the central nervous system and endodermal pouches. In the tail, expressed in the spinal cord and posterior lateral line precursors. Weakly expressed in the pronephric ducts, only in the corpuscles of Stanius. At 48 hpf, still expressed in the retina and brain, where expression is almost uniform. At this stage, expression is decreased in the spinal cord and is absent from the lateral line cells and pronephric ducts, but appears in the intestine and continues in the pharyngeal arches. In 72 hpf embryos, expression in the brain remains uniform but is restricted to amacrine cells in the retina. In the pharyngeal arches, expression continues to be limited to the ectodermal and endodermal covering cells.

It localises to the nucleus. The sequence is that of Prothymosin alpha-A (ptmaa) from Danio rerio (Zebrafish).